We begin with the raw amino-acid sequence, 43 residues long: U5-hexatoxin-Mr1a (43 aa).

4 cysteine pairs are disulfide-bonded: Cys-1-Cys-16, Cys-8-Cys-21, Cys-15-Cys-36, and Cys-17-Cys-43.

The protein belongs to the neurotoxin 35 family. In terms of processing, contains 4 disulfide bonds. As to expression, expressed by the venom gland.

It is found in the secreted. In terms of biological role, this toxin blocks the neuromuscular transmission, and also acts on muscle. It exerts an effect of first exciting and then inhibiting the contraction of muscle. This toxin is active only against mammals. In Macrothele raveni (Funnel-web spider), this protein is U5-hexatoxin-Mr1a.